The sequence spans 75 residues: UPF0352 protein YejL (75 aa).

Belongs to the UPF0352 family.

The polypeptide is UPF0352 protein YejL (Escherichia coli O127:H6 (strain E2348/69 / EPEC)).